A 60-amino-acid polypeptide reads, in one-letter code: Mastoparan (60 aa).

Residues 1-27 (MKDTILILFTAFIALLGFFGMSAEALA) form the signal peptide. AXPX repeat units lie at residues 27–30 (ADPL), 31–34 (ADPS), 35–38 (AGPN), and 41–44 (ADPE). The propeptide occupies 28-45 (DPLADPSAGPNAEADPEA). Residue Leu59 is modified to Leucine amide.

It belongs to the MCD family. Mastoparan subfamily. As to expression, expressed by the venom gland.

It localises to the secreted. It is found in the target cell membrane. In terms of biological role, mast cell degranulating peptide. Its mast cell degranulation activity may be related to the activation of G-protein coupled receptors in mast cells as well as interaction with other proteins located in cell endosomal membranes in the mast cells. Has a membranolytic activity on human glioblastoma multiforme cells (brain tumor cells) that leads to cell necrosis. In Vespa orientalis (Oriental hornet), this protein is Mastoparan.